The primary structure comprises 146 residues: Lipoprotein signal peptidase (146 aa).

The next 3 helical transmembrane spans lie at 10 to 30 (GLFV…LGGF), 54 to 74 (FLEG…LLFL), and 80 to 100 (FFVA…SNIL). Active-site residues include D110 and D127. Residues 118 to 138 (FEFAIFNFADVMIDVAVALFL) form a helical membrane-spanning segment.

It belongs to the peptidase A8 family.

It localises to the cell inner membrane. It catalyses the reaction Release of signal peptides from bacterial membrane prolipoproteins. Hydrolyzes -Xaa-Yaa-Zaa-|-(S,diacylglyceryl)Cys-, in which Xaa is hydrophobic (preferably Leu), and Yaa (Ala or Ser) and Zaa (Gly or Ala) have small, neutral side chains.. Its pathway is protein modification; lipoprotein biosynthesis (signal peptide cleavage). In terms of biological role, this protein specifically catalyzes the removal of signal peptides from prolipoproteins. This Wolinella succinogenes (strain ATCC 29543 / DSM 1740 / CCUG 13145 / JCM 31913 / LMG 7466 / NCTC 11488 / FDC 602W) (Vibrio succinogenes) protein is Lipoprotein signal peptidase.